The following is a 45-amino-acid chain: Conotoxin reg3.12 (45 aa).

Positions 1–31 are excised as a propeptide; the sequence is DQPVERHAGNKRHLNPTIRRAMIIDANRREK. Intrachain disulfides connect Cys32–Cys44, Cys33–Cys42, and Cys38–Cys45.

This sequence belongs to the conotoxin M superfamily. Expressed by the venom duct.

The protein resides in the secreted. This chain is Conotoxin reg3.12, found in Conus regius (Crown cone).